We begin with the raw amino-acid sequence, 297 residues long: Mitochondrial glycine transporter (297 aa).

Solcar repeat units follow at residues 5 to 81 (TGHL…MRTA), 105 to 189 (LSMY…LKHT), and 211 to 295 (TSTA…LIKH). A run of 6 helical transmembrane segments spans residues 8–33 (LIGG…TRFQ), 56–82 (GTLP…RTAL), 111–136 (LVTG…VRYE), 164–187 (GFGP…EKLK), 215–241 (INST…KTRM), and 270–288 (GLSM…AWGI).

Belongs to the mitochondrial carrier (TC 2.A.29) family. SLC25A38 subfamily.

Its subcellular location is the mitochondrion inner membrane. It carries out the reaction glycine(in) = glycine(out). Its function is as follows. Mitochondrial glycine transporter that imports glycine into the mitochondrial matrix. Plays an important role in providing glycine for the first enzymatic step in heme biosynthesis, the condensation of glycine with succinyl-CoA to produce 5-aminolevulinate (ALA) in the mitochondrial matrix. This is Mitochondrial glycine transporter from Candida glabrata (strain ATCC 2001 / BCRC 20586 / JCM 3761 / NBRC 0622 / NRRL Y-65 / CBS 138) (Yeast).